Here is a 932-residue protein sequence, read N- to C-terminus: Phosphoenolpyruvate carboxylase (932 aa).

Active-site residues include His164 and Lys594.

Belongs to the PEPCase type 1 family. Mg(2+) is required as a cofactor.

The catalysed reaction is oxaloacetate + phosphate = phosphoenolpyruvate + hydrogencarbonate. Its function is as follows. Forms oxaloacetate, a four-carbon dicarboxylic acid source for the tricarboxylic acid cycle. The chain is Phosphoenolpyruvate carboxylase from Bradyrhizobium diazoefficiens (strain JCM 10833 / BCRC 13528 / IAM 13628 / NBRC 14792 / USDA 110).